A 160-amino-acid polypeptide reads, in one-letter code: MARQKFSGKGGKGKSKKGQQSTAPRRRVEFKYKGFTLPELQEMPIKKFIEIVPARQRRTMSRGITPNQRKLVMKIKKARRLVNRGKEPRVIRTHCRDFVITPEMIGLTISIYTGKQFKEIKLVEETLGRFLGEMAPTRGIVQHGSPGMGATRGSMFVPIK.

Residues 1 to 27 (MARQKFSGKGGKGKSKKGQQSTAPRRR) are disordered.

The protein belongs to the universal ribosomal protein uS19 family.

Its function is as follows. Protein S19 forms a complex with S13 that binds strongly to the 16S ribosomal RNA. This is Small ribosomal subunit protein uS19 from Methanococcus vannielii (strain ATCC 35089 / DSM 1224 / JCM 13029 / OCM 148 / SB).